The chain runs to 423 residues: Imidazolonepropionase (423 aa).

Residues His-78 and His-80 each contribute to the Fe(3+) site. Zn(2+) contacts are provided by His-78 and His-80. Residues Arg-87, Tyr-150, and His-183 each contribute to the 4-imidazolone-5-propanoate site. Tyr-150 lines the N-formimidoyl-L-glutamate pocket. His-247 provides a ligand contact to Fe(3+). A Zn(2+)-binding site is contributed by His-247. Glu-250 provides a ligand contact to 4-imidazolone-5-propanoate. Position 322 (Asp-322) interacts with Fe(3+). Asp-322 is a Zn(2+) binding site. N-formimidoyl-L-glutamate is bound by residues Asn-324 and Gly-326. A 4-imidazolone-5-propanoate-binding site is contributed by Ser-327.

Belongs to the metallo-dependent hydrolases superfamily. HutI family. Zn(2+) serves as cofactor. The cofactor is Fe(3+).

The protein resides in the cytoplasm. The catalysed reaction is 4-imidazolone-5-propanoate + H2O = N-formimidoyl-L-glutamate. The protein operates within amino-acid degradation; L-histidine degradation into L-glutamate; N-formimidoyl-L-glutamate from L-histidine: step 3/3. Catalyzes the hydrolytic cleavage of the carbon-nitrogen bond in imidazolone-5-propanoate to yield N-formimidoyl-L-glutamate. It is the third step in the universal histidine degradation pathway. The sequence is that of Imidazolonepropionase from Bacillus mycoides (strain KBAB4) (Bacillus weihenstephanensis).